An 837-amino-acid polypeptide reads, in one-letter code: Granulocyte colony-stimulating factor receptor (837 aa).

The N-terminal stretch at methionine 1–serine 25 is a signal peptide. Disulfide bonds link cysteine 26-cysteine 52 and cysteine 46-cysteine 102. An Ig-like C2-type domain is found at cysteine 26–leucine 118. Residues cysteine 26 to aspartate 626 are Extracellular-facing. Asparagine 51, asparagine 94, and asparagine 129 each carry an N-linked (GlcNAc...) asparagine glycan. Fibronectin type-III domains are found at residues serine 126–proline 231, leucine 236–threonine 331, alanine 334–proline 433, alanine 434–alanine 529, and proline 530–proline 624. Cystine bridges form between cysteine 132/cysteine 143, cysteine 168/cysteine 219, cysteine 178/cysteine 187, cysteine 249/cysteine 296, and cysteine 267/cysteine 310. N-linked (GlcNAc...) asparagine glycans are attached at residues asparagine 186 and asparagine 279. The WSXWS motif signature appears at tryptophan 319–serine 323. Residues asparagine 392, asparagine 408, asparagine 474, asparagine 487, asparagine 582, and asparagine 613 are each glycosylated (N-linked (GlcNAc...) asparagine). A helical membrane pass occupies residues leucine 627–cysteine 650. Residues lysine 651–phenylalanine 837 are Cytoplasmic-facing. The Box 1 motif signature appears at phenylalanine 658–alanine 666.

The protein belongs to the type I cytokine receptor family. Type 2 subfamily. Homodimer. The dimeric receptor binds two CSF3 molecules. Interacts with CEACAM1; down-regulates the CSF3R-STAT3 pathway through recruitment of PTPN6 that dephosphorylates CSF3R. N-glycosylated. In terms of tissue distribution, found in bone marrow.

The protein resides in the membrane. In terms of biological role, receptor for granulocyte colony-stimulating factor (CSF3). In addition it may function in some adhesion or recognition events at the cell surface. This is Granulocyte colony-stimulating factor receptor (Csf3r) from Mus musculus (Mouse).